The chain runs to 55 residues: Small polypeptide DEVIL 10 (55 aa).

N7 carries an N-linked (GlcNAc...) asparagine glycan. The interval 19–50 (RFGDRCLLMAKQQRTRLYILRRCVSMLLCWHD) is required for DVL/RTFL small polypeptide activity. Residues 32–48 (RTRLYILRRCVSMLLCW) form a helical membrane-spanning segment.

The protein belongs to the DVL/RTFL small polypeptides family.

It is found in the cell membrane. Its function is as follows. Small polypeptide acting as a regulatory molecule which coordinates cellular responses required for differentiation, growth and development, probably by restricting polar cell proliferation in lateral organs and coordinating socket cell recruitment and differentiation at trichome sites. This is Small polypeptide DEVIL 10 from Arabidopsis thaliana (Mouse-ear cress).